Here is a 249-residue protein sequence, read N- to C-terminus: Enolase-phosphatase E1 (249 aa).

Residues D14 and E16 each contribute to the Mg(2+) site. Substrate contacts are provided by residues 141–142 and K175; that span reads SS. D200 contacts Mg(2+).

It belongs to the HAD-like hydrolase superfamily. MasA/MtnC family. In terms of assembly, monomer. Mg(2+) is required as a cofactor.

The protein resides in the cytoplasm. Its subcellular location is the nucleus. The enzyme catalyses 5-methylsulfanyl-2,3-dioxopentyl phosphate + H2O = 1,2-dihydroxy-5-(methylsulfanyl)pent-1-en-3-one + phosphate. It functions in the pathway amino-acid biosynthesis; L-methionine biosynthesis via salvage pathway; L-methionine from S-methyl-5-thio-alpha-D-ribose 1-phosphate: step 3/6. Its pathway is amino-acid biosynthesis; L-methionine biosynthesis via salvage pathway; L-methionine from S-methyl-5-thio-alpha-D-ribose 1-phosphate: step 4/6. Its function is as follows. Bifunctional enzyme that catalyzes the enolization of 2,3-diketo-5-methylthiopentyl-1-phosphate (DK-MTP-1-P) into the intermediate 2-hydroxy-3-keto-5-methylthiopentenyl-1-phosphate (HK-MTPenyl-1-P), which is then dephosphorylated to form the acireductone 1,2-dihydroxy-3-keto-5-methylthiopentene (DHK-MTPene). The protein is Enolase-phosphatase E1 of Drosophila virilis (Fruit fly).